Here is a 193-residue protein sequence, read N- to C-terminus: Xanthine phosphoribosyltransferase (193 aa).

Residues Leu-20 and Thr-27 each contribute to the xanthine site. Residue Ala-128 to Ala-132 participates in 5-phospho-alpha-D-ribose 1-diphosphate binding. Lys-156 lines the xanthine pocket.

It belongs to the purine/pyrimidine phosphoribosyltransferase family. Xpt subfamily. As to quaternary structure, homodimer.

The protein resides in the cytoplasm. The catalysed reaction is XMP + diphosphate = xanthine + 5-phospho-alpha-D-ribose 1-diphosphate. Its pathway is purine metabolism; XMP biosynthesis via salvage pathway; XMP from xanthine: step 1/1. Functionally, converts the preformed base xanthine, a product of nucleic acid breakdown, to xanthosine 5'-monophosphate (XMP), so it can be reused for RNA or DNA synthesis. The protein is Xanthine phosphoribosyltransferase of Streptococcus pneumoniae serotype 19F (strain G54).